Consider the following 531-residue polypeptide: Histone-arginine methyltransferase CARMER (531 aa).

The SAM-dependent MTase PRMT-type domain maps to 141–450; it reads ASQYFQFYGY…QSYDVTIDLH (310 aa). 6 residues coordinate S-adenosyl-L-methionine: Gln154, Arg163, Gly187, Glu209, Glu238, and Thr266. Arg501 is subject to Asymmetric dimethylarginine; by autocatalysis.

Belongs to the class I-like SAM-binding methyltransferase superfamily. Protein arginine N-methyltransferase family. Homodimer. The dimethylated protein is the major form.

Its subcellular location is the cytoplasm. The protein resides in the nucleus. The catalysed reaction is L-arginyl-[protein] + 2 S-adenosyl-L-methionine = N(omega),N(omega)-dimethyl-L-arginyl-[protein] + 2 S-adenosyl-L-homocysteine + 2 H(+). Methylates (mono- and asymmetric dimethylation) the guanidino nitrogens of arginyl residues in proteins. May methylate histone H3 at 'Arg-17' and activate transcription via chromatin remodeling. The polypeptide is Histone-arginine methyltransferase CARMER (Art4) (Drosophila persimilis (Fruit fly)).